We begin with the raw amino-acid sequence, 46 residues long: Esculentin-1a/b (46 aa).

C40 and C46 are oxidised to a cystine.

This sequence belongs to the frog skin active peptide (FSAP) family. Esculentin subfamily. Expressed by the skin glands.

The protein resides in the secreted. Antimicrobial peptide. Stimulates insulin secretion by BRIN-BD11 cells in vitro. Shows hemolytic activity. The chain is Esculentin-1a/b from Pelophylax ridibundus (Marsh frog).